Consider the following 118-residue polypeptide: Small ribosomal subunit protein uS13 (118 aa).

The interval 94-118 is disordered; that stretch reads GLPLRGQRTKTNARTRKGPRKPIKK.

The protein belongs to the universal ribosomal protein uS13 family. In terms of assembly, part of the 30S ribosomal subunit. Forms a loose heterodimer with protein S19. Forms two bridges to the 50S subunit in the 70S ribosome.

Functionally, located at the top of the head of the 30S subunit, it contacts several helices of the 16S rRNA. In the 70S ribosome it contacts the 23S rRNA (bridge B1a) and protein L5 of the 50S subunit (bridge B1b), connecting the 2 subunits; these bridges are implicated in subunit movement. Contacts the tRNAs in the A and P-sites. The protein is Small ribosomal subunit protein uS13 of Cellvibrio japonicus (strain Ueda107) (Pseudomonas fluorescens subsp. cellulosa).